A 78-amino-acid chain; its full sequence is Small ribosomal subunit protein bS18B (78 aa).

It belongs to the bacterial ribosomal protein bS18 family. In terms of assembly, part of the 30S ribosomal subunit. Forms a tight heterodimer with protein bS6.

Binds as a heterodimer with protein bS6 to the central domain of the 16S rRNA, where it helps stabilize the platform of the 30S subunit. In Streptomyces griseus subsp. griseus (strain JCM 4626 / CBS 651.72 / NBRC 13350 / KCC S-0626 / ISP 5235), this protein is Small ribosomal subunit protein bS18B.